Consider the following 104-residue polypeptide: Co-chaperonin GroES 2 (104 aa).

Belongs to the GroES chaperonin family. As to quaternary structure, heptamer of 7 subunits arranged in a ring. Interacts with the chaperonin GroEL.

It localises to the cytoplasm. Its function is as follows. Together with the chaperonin GroEL, plays an essential role in assisting protein folding. The GroEL-GroES system forms a nano-cage that allows encapsulation of the non-native substrate proteins and provides a physical environment optimized to promote and accelerate protein folding. GroES binds to the apical surface of the GroEL ring, thereby capping the opening of the GroEL channel. This Bradyrhizobium diazoefficiens (strain JCM 10833 / BCRC 13528 / IAM 13628 / NBRC 14792 / USDA 110) protein is Co-chaperonin GroES 2.